We begin with the raw amino-acid sequence, 124 residues long: Small ribosomal subunit protein uS12 (124 aa).

Asp89 bears the 3-methylthioaspartic acid mark.

This sequence belongs to the universal ribosomal protein uS12 family. Part of the 30S ribosomal subunit. Contacts proteins S8 and S17. May interact with IF1 in the 30S initiation complex.

Its function is as follows. With S4 and S5 plays an important role in translational accuracy. Interacts with and stabilizes bases of the 16S rRNA that are involved in tRNA selection in the A site and with the mRNA backbone. Located at the interface of the 30S and 50S subunits, it traverses the body of the 30S subunit contacting proteins on the other side and probably holding the rRNA structure together. The combined cluster of proteins S8, S12 and S17 appears to hold together the shoulder and platform of the 30S subunit. The polypeptide is Small ribosomal subunit protein uS12 (Hydrogenovibrio crunogenus (strain DSM 25203 / XCL-2) (Thiomicrospira crunogena)).